The primary structure comprises 515 residues: Endoglucanase 2 (515 aa).

The N-terminal stretch at 1–31 is a signal peptide; sequence MVAKPRSRCCCCSVFIGVIILIAIIIAVIFT. Residue Asn-37 is glycosylated (N-linked (GlcNAc...) asparagine). Asp-100 functions as the Nucleophile in the catalytic mechanism. An N-linked (GlcNAc...) asparagine glycan is attached at Asn-250. Residue His-433 is part of the active site. A glycan (N-linked (GlcNAc...) asparagine) is linked at Asn-475. The active site involves Asp-480. An N-linked (GlcNAc...) asparagine glycan is attached at Asn-483. Glu-489 is a catalytic residue.

It belongs to the glycosyl hydrolase 9 (cellulase E) family.

The protein localises to the secreted. The enzyme catalyses Endohydrolysis of (1-&gt;4)-beta-D-glucosidic linkages in cellulose, lichenin and cereal beta-D-glucans.. This chain is Endoglucanase 2, found in Arabidopsis thaliana (Mouse-ear cress).